The following is a 132-amino-acid chain: MSTKYVEAGELKEGSYVVIDGEPCRVVEIEKSKTGKHGSAKARIVAVGVFDGGKRTLSLPVDAQVEVPIIEKFTAQVLSISGDIIQLMDMRDYKTIEVPMSYVEEEAKGRLAPGAEVEVWQILDRFKIVRVK.

Position 36 is a hypusine (lysine 36).

Belongs to the eIF-5A family.

It is found in the cytoplasm. Its function is as follows. Functions by promoting the formation of the first peptide bond. The protein is Translation initiation factor 5A (eIF5A) of Pyrobaculum neutrophilum (strain DSM 2338 / JCM 9278 / NBRC 100436 / V24Sta) (Thermoproteus neutrophilus).